A 4903-amino-acid polypeptide reads, in one-letter code: Histone-lysine N-methyltransferase 2C (4903 aa).

Disordered stretches follow at residues 1 to 116 (MSSE…SEES) and 159 to 202 (LTLP…PPQQ). Positions 13-28 (QPPPAPPEEPGAPAPS) are enriched in pro residues. Serine 28 and serine 46 each carry phosphoserine. The a.T hook DNA-binding region spans 34-46 (KRPRGRPRKDGAS). Residues 50–59 (RARKKPRSRG) show a composition bias toward basic residues. Over residues 64 to 81 (EDEDSMDGLETTETENIV) the composition is skewed to acidic residues. A phosphoserine mark is found at serine 89 and serine 113. Residues 101–116 (SKQPVSALQRSVSEES) show a composition bias toward polar residues. A C2HC pre-PHD-type 1; degenerate zinc finger spans residues 226 to 261 (ELSLVGLPDAIDVQALFDSTGTCWAHHRCVEWSLGI). 4 consecutive PHD-type zinc fingers follow at residues 282–330 (ERCA…PEHI), 340–390 (DANC…CKVC), 387–437 (CKVC…CRIC), and 463–519 (DNLC…CKHL). The segment at 343–388 (CAVCDSPGDLLDQFFCTTCGQHYHGMCLDIAVTPLKRAGWQCPECK) adopts an RING-type zinc-finger fold. Residues 435–488 (RICIECGTRSSTQWHHNCLICDTCYQQQDNLCPFCGKCYHPELQKDMLHCNMCK) enclose the DHHC domain. The tract at residues 671–703 (SEVASKELSPPKSAPETAAPEALLSPHSERSLS) is disordered. Lysine 751 carries the post-translational modification N6-acetyllysine. Over residues 824–835 (TKRKFSPGRPRS) the composition is skewed to basic residues. Disordered regions lie at residues 824-857 (TKRK…DTSE) and 882-904 (GFPG…GRSK). Residues 838–848 (GAWSNHNTVSP) show a composition bias toward polar residues. Serine 847 is subject to Phosphoserine. 3 consecutive PHD-type zinc fingers follow at residues 950 to 1003 (QDMC…CTVC), 1000 to 1050 (CTVC…CVWC), and 1077 to 1132 (LSSC…CRPY). A disordered region spans residues 1208–1318 (AVLQTPPDIQ…PSRDDGWREQ (111 aa)). The segment covering 1217-1263 (QSEHSRDGEMDDSREGELMDCDGKSESSPEREAGDDETKGIEGTDAI) has biased composition (basic and acidic residues). The residue at position 1294 (serine 1294) is a Phosphoserine. Positions 1309 to 1318 (PSRDDGWREQ) are enriched in basic and acidic residues. Residues 1330-1352 (VAENTDKIKKRYRKRKNKLEETF) adopt a coiled-coil conformation. Disordered stretches follow at residues 1397 to 1419 (SDPL…ADDP) and 1447 to 1473 (HSDI…RPLT). 2 stretches are compositionally biased toward polar residues: residues 1406 to 1415 (TSAKPGTQGT) and 1455 to 1471 (ADAS…SSRP). An N6-acetyllysine modification is found at lysine 1497. 2 disordered regions span residues 1594–1617 (NAIA…ENDT) and 1698–1757 (VQMS…AKIE). Positions 1599–1617 (DPNSSWAPTTPSMEGENDT) are enriched in polar residues. Positions 1707-1717 (RQQQQDSIDPS) are enriched in low complexity. The segment covering 1718-1742 (SRIDSDLFKDPLKQRESEHEQEWKF) has biased composition (basic and acidic residues). A coiled-coil region spans residues 1743–1790 (RQQMRQKSKQQAKIEATQKLEQVKNEQQQQQQQQQQQQQQQLASQHLL). Lysine 1761 carries the N6-acetyllysine modification. The tract at residues 1791–2375 (VAPGSDTPSS…MSQADTEKLR (585 aa)) is disordered. Polar residues predominate over residues 1796 to 1819 (DTPSSGAQSPLTPQAGNGNVSPAQ). Residues 1855–1886 (PSRIPVQESLSQSQNSQPPSPQMFSPGSSHSR) are compositionally biased toward low complexity. Serine 1983 carries the phosphoserine modification. Residues 1986–2001 (ISEQSTKGPLTTGTSD) are compositionally biased toward polar residues. N6-acetyllysine is present on lysine 2005. 3 stretches are compositionally biased toward polar residues: residues 2113–2124 (GTISRSASQDPY), 2137–2151 (SYSQ…NPDP), and 2325–2334 (GNFSTSSNLP). Residues 2335–2347 (VSSQGQQFSSVSQ) show a composition bias toward low complexity. Residues 2355–2369 (SGGTDTQNTVNMSQA) are compositionally biased toward polar residues. Arginine 2447 and arginine 2563 each carry asymmetric dimethylarginine. Disordered regions lie at residues 2561-2668 (RSRL…DNLE), 2702-2736 (KDLD…NDPN), and 2786-2844 (VEPK…GDAD). 3 stretches are compositionally biased toward polar residues: residues 2602 to 2611 (QPSQCLSNQL), 2621 to 2636 (PPSQ…QSSI), and 2653 to 2668 (PLST…DNLE). Residues 2788 to 2807 (PKTRDQGDKTMVLEDKDLPQ) are compositionally biased toward basic and acidic residues. An N6-acetyllysine mark is found at lysine 2796 and lysine 2803. Serine 2822 is subject to Phosphoserine. Residue tyrosine 2824 is modified to Phosphotyrosine. The segment covering 2825-2843 (SKEEIQSEIKNHDDSRGDA) has biased composition (basic and acidic residues). N6-acetyllysine occurs at positions 2826 and 2862. The disordered stretch occupies residues 2920–2953 (EKCDDSDIRPSGSSPPSLPISPSTHGSSLPPTLI). The segment covering 2929-2942 (PSGSSPPSLPISPS) has biased composition (low complexity). 2 coiled-coil regions span residues 3047-3074 (LLQD…QRSE) and 3166-3193 (NDSQ…YLEE). The span at 3198 to 3214 (HRKSKKALSAKQRTAKK) shows a compositional bias: basic residues. The segment at 3198–3223 (HRKSKKALSAKQRTAKKAGREFPEED) is disordered. 2 coiled-coil regions span residues 3224–3270 (AEQL…QQCA) and 3387–3432 (FSES…QHCL). Disordered stretches follow at residues 3329–3407 (PGWQ…QERQ) and 3444–3910 (SQMP…QKMA). Positions 3391-3407 (FQERERKERLREQQERQ) are enriched in basic and acidic residues. The span at 3464–3485 (LQQSPQHQQQIGPVLQQQNVQQ) shows a compositional bias: low complexity. Polar residues-rich tracts occupy residues 3486-3503 (GSVN…NEQR), 3515-3524 (PSASGGSPNF), 3557-3586 (PVAN…SLIQ), and 3632-3647 (LSET…PSEL). Basic and acidic residues-rich tracts occupy residues 3697–3739 (AEAD…KIKD) and 3795–3804 (SSTKDGKLIE). Lysine 3709 carries the post-translational modification N6-acetyllysine. Residues 3871–3885 (MYSSSDSFTHLKQQN) are compositionally biased toward polar residues. The segment covering 3890–3904 (PPTPPASLPPTPPPM) has biased composition (pro residues). Serine 4027 is modified (phosphoserine). Arginine 4132 is modified (asymmetric dimethylarginine). Residues 4159–4184 (PNVPFPPTSNGLSGYKDSSHGPAEGA) are disordered. Serine 4260 is modified (phosphoserine). Residues 4391–4431 (CRKCCFCHEEGDGLTDGPARLLNLDLDLWVHLNCALWSTEV) form a C2HC pre-PHD-type 2 zinc finger. The segment at 4452–4499 (MKCVFCHKTGATSGCHRFRCTNIYHFTCATKAQCMFFKDKTMLCPMHK) adopts a PHD-type 8 zinc-finger fold. Residues 4537 to 4597 (DHTFRVGSLI…CRYLCSIEEK (61 aa)) enclose the FYR N-terminal domain. The region spanning 4598-4683 (DGRPVFVIRI…EACENYTFRY (86 aa)) is the FYR C-terminal domain. The short motif at 4699 to 4704 (GCARSE) is the WDR5 interaction motif (WIN) element. Positions 4763–4879 (SNVYLARSRI…KGEELCYDYK (117 aa)) constitute an SET domain. Residues tyrosine 4817 and 4840–4841 (NH) each bind S-adenosyl-L-methionine. Zn(2+)-binding residues include cysteine 4843, cysteine 4891, cysteine 4893, and cysteine 4898. Residues 4887–4903 (HKIPCHCGAVNCRKWMN) enclose the Post-SET domain.

It belongs to the class V-like SAM-binding methyltransferase superfamily. Histone-lysine methyltransferase family. TRX/MLL subfamily. As to quaternary structure, component of the MLL3 complex (also named ASCOM complex), at least composed of catalytic subunit KMT2C/MLL3, ASH2L, RBBP5, WDR5, NCOA6, DPY30, KDM6A, PAXIP1/PTIP, PAGR1 and alpha- and beta-tubulin. Forms a core complex with the evolutionary conserved subcomplex WRAD composed of WDR5, RBBP5, ASH2L/ASH2 and DPY30 subunits; WRAD differentially stimulates the methyltransferase activity. Interacts (via WIN motif) with WDR5. In terms of tissue distribution, in adult, detected in testis, kidney, spleen and lung, weakly expressed in brain and absent in heart and liver. First detected throughout the embryo at 8 dpc when expression is strong in forebrain neuroepithelium and absent in heart. Expressed in the eye lens between 10 and 14.5 dpc. By 13 dpc, expressed strongly in spinal cord, hand/foot plates and gonads.

It localises to the nucleus. It catalyses the reaction L-lysyl(4)-[histone H3] + S-adenosyl-L-methionine = N(6)-methyl-L-lysyl(4)-[histone H3] + S-adenosyl-L-homocysteine + H(+). Its function is as follows. Histone methyltransferase that catalyzes methyl group transfer from S-adenosyl-L-methionine to the epsilon-amino group of 'Lys-4' of histone H3 (H3K4). Part of chromatin remodeling machinery predominantly forms H3K4me1 methylation marks at active chromatin sites where transcription and DNA repair take place. Likely plays a redundant role with KMT2D in enriching H3K4me1 mark on primed and active enhancer elements. The sequence is that of Histone-lysine N-methyltransferase 2C (Kmt2c) from Mus musculus (Mouse).